We begin with the raw amino-acid sequence, 347 residues long: Protein RecA (347 aa).

ATP is bound at residue 65 to 72; it reads GPESSGKT. The tract at residues 325-347 is disordered; that stretch reads KLGISDGDVEETEDAPKSLFDEE. Over residues 338–347 the composition is skewed to basic and acidic residues; that stretch reads DAPKSLFDEE.

It belongs to the RecA family.

It is found in the cytoplasm. Its function is as follows. Can catalyze the hydrolysis of ATP in the presence of single-stranded DNA, the ATP-dependent uptake of single-stranded DNA by duplex DNA, and the ATP-dependent hybridization of homologous single-stranded DNAs. It interacts with LexA causing its activation and leading to its autocatalytic cleavage. This is Protein RecA from Staphylococcus aureus (strain Mu3 / ATCC 700698).